A 240-amino-acid polypeptide reads, in one-letter code: MSSCFCSKSQETEKRGAVSEDQLVISDDSTHPANLICELCKVFYNNGWVTGTGGGISIREGSKIYIAPSGVQKERMVPDNMFVMDLESENYLRTPLTLKPSACTPLFLSAYKMRDAGACIHTHSQAAVMVTLLYDKVFEISSIEQIKAIPKVTEKGNLMYSDRLVIPIIENTEREEDLTDSLQQAIEEYPGTTAVLVRRHGIYVWGETVWKAKVYNEAIDYLLELALKMHQLGIPTVKQN.

A substrate-binding site is contributed by C103. The Zn(2+) site is built by H121 and H123. E144 serves as the catalytic Proton donor/acceptor. H200 is a Zn(2+) binding site.

This sequence belongs to the aldolase class II family. MtnB subfamily. Zn(2+) is required as a cofactor.

Its subcellular location is the cytoplasm. It catalyses the reaction 5-(methylsulfanyl)-D-ribulose 1-phosphate = 5-methylsulfanyl-2,3-dioxopentyl phosphate + H2O. It participates in amino-acid biosynthesis; L-methionine biosynthesis via salvage pathway; L-methionine from S-methyl-5-thio-alpha-D-ribose 1-phosphate: step 2/6. In terms of biological role, catalyzes the dehydration of methylthioribulose-1-phosphate (MTRu-1-P) into 2,3-diketo-5-methylthiopentyl-1-phosphate (DK-MTP-1-P). In Komagataella phaffii (strain GS115 / ATCC 20864) (Yeast), this protein is Methylthioribulose-1-phosphate dehydratase.